The sequence spans 454 residues: Bifunctional protein GlmU (454 aa).

Residues 1–226 (MSLEIVILAA…AMEVQGVNDR (226 aa)) are pyrophosphorylase. UDP-N-acetyl-alpha-D-glucosamine-binding positions include 8-11 (LAAG), lysine 22, glutamine 73, 78-79 (GT), 99-101 (YGD), glycine 136, glutamate 151, asparagine 166, and asparagine 224. Aspartate 101 is a binding site for Mg(2+). A Mg(2+)-binding site is contributed by asparagine 224. Residues 227–247 (MQQAQLERHYQRLRAEELMRQ) are linker. Residues 248–454 (GVTLLDPQRL…NWKRPEKIRK (207 aa)) form an N-acetyltransferase region. UDP-N-acetyl-alpha-D-glucosamine is bound by residues arginine 330 and lysine 348. The active-site Proton acceptor is histidine 360. Residues tyrosine 363 and asparagine 374 each contribute to the UDP-N-acetyl-alpha-D-glucosamine site. Acetyl-CoA is bound by residues alanine 377, 383-384 (NY), serine 402, alanine 420, and arginine 437.

In the N-terminal section; belongs to the N-acetylglucosamine-1-phosphate uridyltransferase family. This sequence in the C-terminal section; belongs to the transferase hexapeptide repeat family. In terms of assembly, homotrimer. It depends on Mg(2+) as a cofactor.

It is found in the cytoplasm. The catalysed reaction is alpha-D-glucosamine 1-phosphate + acetyl-CoA = N-acetyl-alpha-D-glucosamine 1-phosphate + CoA + H(+). It catalyses the reaction N-acetyl-alpha-D-glucosamine 1-phosphate + UTP + H(+) = UDP-N-acetyl-alpha-D-glucosamine + diphosphate. It functions in the pathway nucleotide-sugar biosynthesis; UDP-N-acetyl-alpha-D-glucosamine biosynthesis; N-acetyl-alpha-D-glucosamine 1-phosphate from alpha-D-glucosamine 6-phosphate (route II): step 2/2. It participates in nucleotide-sugar biosynthesis; UDP-N-acetyl-alpha-D-glucosamine biosynthesis; UDP-N-acetyl-alpha-D-glucosamine from N-acetyl-alpha-D-glucosamine 1-phosphate: step 1/1. Its pathway is bacterial outer membrane biogenesis; LPS lipid A biosynthesis. In terms of biological role, catalyzes the last two sequential reactions in the de novo biosynthetic pathway for UDP-N-acetylglucosamine (UDP-GlcNAc). The C-terminal domain catalyzes the transfer of acetyl group from acetyl coenzyme A to glucosamine-1-phosphate (GlcN-1-P) to produce N-acetylglucosamine-1-phosphate (GlcNAc-1-P), which is converted into UDP-GlcNAc by the transfer of uridine 5-monophosphate (from uridine 5-triphosphate), a reaction catalyzed by the N-terminal domain. The polypeptide is Bifunctional protein GlmU (Pseudomonas paraeruginosa (strain DSM 24068 / PA7) (Pseudomonas aeruginosa (strain PA7))).